A 688-amino-acid chain; its full sequence is Pescadillo homolog (688 aa).

The region spanning 351 to 470 (EVASLFASFT…KLLRHDLYAP (120 aa)) is the BRCT domain. 2 disordered regions span residues 411–442 (RPPL…GTRM) and 496–688 (AEQE…TKGR). Pro residues predominate over residues 412-424 (PPLPESALPPLPQ). Positions 496–536 (AEQESDGEAERQAEEENEEEESEVEGLSMDKEMVETENSEA) form a coiled coil. Composition is skewed to acidic residues over residues 510 to 519 (EENEEEESEV), 530 to 544 (ETEN…EESV), 554 to 565 (GSDDEEEESEED), and 576 to 589 (EAAD…DDEE). Residues 619–634 (KKSKKQKPLAKKHAAQ) show a composition bias toward basic residues. A coiled-coil region spans residues 627–686 (LAKKHAAQKKKEQEELERQKMMMSRKKRKLLDKMLYSNKKKDEEAEKLRRKRRKIEQGTK). Residues 635–646 (KKKEQEELERQK) are compositionally biased toward basic and acidic residues.

It belongs to the pescadillo family. As to quaternary structure, component of the NOP7 complex, composed of ERB1, NOP7 and YTM1. The complex is held together by ERB1, which interacts with NOP7 via its N-terminal domain and with YTM1 via a high-affinity interaction between the seven-bladed beta-propeller domains of the 2 proteins. The NOP7 complex associates with the 66S pre-ribosome.

The protein resides in the nucleus. It is found in the nucleolus. The protein localises to the nucleoplasm. Its function is as follows. Component of the NOP7 complex, which is required for maturation of the 25S and 5.8S ribosomal RNAs and formation of the 60S ribosome. This is Pescadillo homolog from Coccidioides immitis (strain RS) (Valley fever fungus).